The chain runs to 472 residues: Coenzyme F(430) synthetase (472 aa).

Position 119 to 125 (119 to 125 (GVKAKTS)) interacts with ATP.

This sequence belongs to the MurCDEF family.

The catalysed reaction is 15,17(3)-seco-F430-17(3)-acid + ATP = coenzyme F430 + ADP + phosphate. In terms of biological role, involved in the biosynthesis of the unique nickel-containing tetrapyrrole coenzyme F430, the prosthetic group of methyl-coenzyme M reductase (MCR), which plays a key role in methanogenesis and anaerobic methane oxidation. Catalyzes the activation the g-propionate side chain of 15,17(3)-seco-F430-17(3)-acid (seco-F430) for intramolecular C-C bond formation to yield the carbocyclic F ring of coenzyme F430. The polypeptide is Coenzyme F(430) synthetase (Methanosarcina acetivorans (strain ATCC 35395 / DSM 2834 / JCM 12185 / C2A)).